A 401-amino-acid chain; its full sequence is uncharacterized protein (401 aa).

Helical transmembrane passes span L44–I64, L69–L89, L99–F119, I130–P150, F201–L221, I246–A266, and L286–V306.

The protein localises to the cell membrane. This is an uncharacterized protein from Mycoplasma pneumoniae (strain ATCC 29342 / M129 / Subtype 1) (Mycoplasmoides pneumoniae).